Reading from the N-terminus, the 223-residue chain is ATP-dependent Clp protease proteolytic subunit 2 (223 aa).

The tract at residues 1–40 (MHAGSGNDMDITRMTPTRLDDEPDAPEPETREDDNKTLNS) is disordered. The segment covering 21-32 (DEPDAPEPETRE) has biased composition (acidic residues). S124 acts as the Nucleophile in catalysis. Residue H149 is part of the active site.

This sequence belongs to the peptidase S14 family. Fourteen ClpP subunits assemble into 2 heptameric rings which stack back to back to give a disk-like structure with a central cavity, resembling the structure of eukaryotic proteasomes.

The protein localises to the cytoplasm. The catalysed reaction is Hydrolysis of proteins to small peptides in the presence of ATP and magnesium. alpha-casein is the usual test substrate. In the absence of ATP, only oligopeptides shorter than five residues are hydrolyzed (such as succinyl-Leu-Tyr-|-NHMec, and Leu-Tyr-Leu-|-Tyr-Trp, in which cleavage of the -Tyr-|-Leu- and -Tyr-|-Trp bonds also occurs).. Cleaves peptides in various proteins in a process that requires ATP hydrolysis. Has a chymotrypsin-like activity. Plays a major role in the degradation of misfolded proteins. The chain is ATP-dependent Clp protease proteolytic subunit 2 from Gluconobacter oxydans (strain 621H) (Gluconobacter suboxydans).